Here is a 509-residue protein sequence, read N- to C-terminus: Bifunctional purine biosynthesis protein PurH (509 aa).

The region spanning 1–145 is the MGS-like domain; sequence MIKRALISVF…KSFKDVVVIS (145 aa).

Belongs to the PurH family.

It carries out the reaction (6R)-10-formyltetrahydrofolate + 5-amino-1-(5-phospho-beta-D-ribosyl)imidazole-4-carboxamide = 5-formamido-1-(5-phospho-D-ribosyl)imidazole-4-carboxamide + (6S)-5,6,7,8-tetrahydrofolate. The catalysed reaction is IMP + H2O = 5-formamido-1-(5-phospho-D-ribosyl)imidazole-4-carboxamide. It functions in the pathway purine metabolism; IMP biosynthesis via de novo pathway; 5-formamido-1-(5-phospho-D-ribosyl)imidazole-4-carboxamide from 5-amino-1-(5-phospho-D-ribosyl)imidazole-4-carboxamide (10-formyl THF route): step 1/1. The protein operates within purine metabolism; IMP biosynthesis via de novo pathway; IMP from 5-formamido-1-(5-phospho-D-ribosyl)imidazole-4-carboxamide: step 1/1. The polypeptide is Bifunctional purine biosynthesis protein PurH (Brachyspira hyodysenteriae (strain ATCC 49526 / WA1)).